We begin with the raw amino-acid sequence, 201 residues long: ATP-dependent Clp protease proteolytic subunit (201 aa).

Serine 98 functions as the Nucleophile in the catalytic mechanism. Histidine 123 is a catalytic residue.

The protein belongs to the peptidase S14 family. In terms of assembly, fourteen ClpP subunits assemble into 2 heptameric rings which stack back to back to give a disk-like structure with a central cavity, resembling the structure of eukaryotic proteasomes.

The protein resides in the cytoplasm. It catalyses the reaction Hydrolysis of proteins to small peptides in the presence of ATP and magnesium. alpha-casein is the usual test substrate. In the absence of ATP, only oligopeptides shorter than five residues are hydrolyzed (such as succinyl-Leu-Tyr-|-NHMec, and Leu-Tyr-Leu-|-Tyr-Trp, in which cleavage of the -Tyr-|-Leu- and -Tyr-|-Trp bonds also occurs).. In terms of biological role, cleaves peptides in various proteins in a process that requires ATP hydrolysis. Has a chymotrypsin-like activity. Plays a major role in the degradation of misfolded proteins. The chain is ATP-dependent Clp protease proteolytic subunit from Rickettsia canadensis (strain McKiel).